The chain runs to 1198 residues: DNA polymerase II large subunit (1198 aa).

Disordered regions lie at residues tyrosine 281 to lysine 332 and histidine 534 to serine 553. Residues aspartate 286 to aspartate 319 show a composition bias toward acidic residues.

It belongs to the archaeal DNA polymerase II family. As to quaternary structure, heterodimer of a large subunit and a small subunit.

It carries out the reaction DNA(n) + a 2'-deoxyribonucleoside 5'-triphosphate = DNA(n+1) + diphosphate. The catalysed reaction is Exonucleolytic cleavage in the 3'- to 5'-direction to yield nucleoside 5'-phosphates.. Its function is as follows. Possesses two activities: a DNA synthesis (polymerase) and an exonucleolytic activity that degrades single-stranded DNA in the 3'- to 5'-direction. Has a template-primer preference which is characteristic of a replicative DNA polymerase. The chain is DNA polymerase II large subunit from Natronomonas pharaonis (strain ATCC 35678 / DSM 2160 / CIP 103997 / JCM 8858 / NBRC 14720 / NCIMB 2260 / Gabara) (Halobacterium pharaonis).